The chain runs to 993 residues: Serine/threonine-protein phosphatase 6 regulatory ankyrin repeat subunit B (993 aa).

28 ANK repeats span residues 7-36 (CEQP…DVNA), 40-69 (EKRT…RVNA), 73-102 (MWLT…DVNA), 106-135 (NWQT…SVNV), 139-168 (GGRT…NINA), 172-201 (KDRR…EVTC), 205-234 (KGYT…EIDE), 238-267 (YGNT…NVNQ), 271-301 (SGFT…DVNI), 305-334 (DGKS…EIDC), 338-367 (DGNT…DTAK), 371-400 (HSMF…EIDT), 404-433 (FGRT…DFHK), 437-466 (CGRT…NVNE), 470-498 (WGRT…DNSE), 531-561 (EGYN…GFEE), 566-595 (ALKS…DLDI), 599-628 (KGRT…SIFV), 633-662 (TKRT…NPEV), 669-698 (KGQT…NVDA), 702-731 (VGCT…SILC), 735-764 (RGRT…SEED), 771-800 (QGYT…FRKF), 803-832 (NPFT…PSIV), 838-867 (KGRT…QVNA), 871-901 (SGKT…DLTV), 905-934 (DLNT…DESL), and 941-970 (ALQT…CVLA). The tract at residues 974–993 (NASRSNGPRSPPGTAVRKEE) is disordered.

In terms of assembly, protein phosphatase 6 (PP6) holoenzyme is proposed to be a heterotrimeric complex formed by the catalytic subunit, a SAPS domain-containing subunit (PP6R) and an ankyrin repeat-domain containing regulatory subunit (ARS). Interacts with PPP6R1.

In terms of biological role, putative regulatory subunit of protein phosphatase 6 (PP6) that may be involved in the recognition of phosphoprotein substrates. This is Serine/threonine-protein phosphatase 6 regulatory ankyrin repeat subunit B (Ankrd44) from Mus musculus (Mouse).